The primary structure comprises 539 residues: Chaperonin GroEL (539 aa).

ATP contacts are provided by residues 29-32 (TLGP), 86-90 (DGTTT), Gly413, and Asp494.

It belongs to the chaperonin (HSP60) family. As to quaternary structure, forms a cylinder of 14 subunits composed of two heptameric rings stacked back-to-back. Interacts with the co-chaperonin GroES.

It is found in the cytoplasm. It catalyses the reaction ATP + H2O + a folded polypeptide = ADP + phosphate + an unfolded polypeptide.. Its function is as follows. Together with its co-chaperonin GroES, plays an essential role in assisting protein folding. The GroEL-GroES system forms a nano-cage that allows encapsulation of the non-native substrate proteins and provides a physical environment optimized to promote and accelerate protein folding. The protein is Chaperonin GroEL of Finegoldia magna (strain ATCC 29328 / DSM 20472 / WAL 2508) (Peptostreptococcus magnus).